We begin with the raw amino-acid sequence, 451 residues long: Tubulin gamma-2 chain (451 aa).

The residue at position 131 (serine 131) is a Phosphoserine; by BRSK1. Residue 142-148 (AGGTGSG) coordinates GTP.

Belongs to the tubulin family. As to quaternary structure, component of the gamma-tubulin ring complex (gTuRC) consisting of TUBGCP2, TUBGCP3, TUBGCP4, TUBGCP5 and TUBGCP6 and gamma-tubulin TUBG1 or TUBG2. TUBGCP2, TUBGCP3, TUBGCP4, TUBGCP5 and TUBGCP6 assemble in a 5:5:2:1:1 stoichiometry; each is associated with a gamma-tubulin, thereby arranging 14 gamma-tubulins in a helical manner. Gamma-tubulin at the first position is blocked by TUBGCP3 at the last position, allowing 13 protafilaments to grow into a microtubule. Interacts with alpha-beta tubulin heterodimers; the interaction allows microtubules to nucleate from the gTuRC. Phosphorylation at Ser-131 by BRSK1 regulates centrosome duplication, possibly by mediating relocation of gamma-tubulin and its associated proteins from the cytoplasm to the centrosome.

It is found in the cytoplasm. The protein localises to the cytoskeleton. The protein resides in the microtubule organizing center. It localises to the centrosome. Functionally, tubulin is the major constituent of microtubules, protein filaments consisting of alpha- and beta-tubulin heterodimers. Gamma-tubulin is a key component of the gamma-tubulin ring complex (gTuRC) which mediates microtubule nucleation. The gTuRC regulates the minus-end nucleation of alpha-beta tubulin heterodimers that grow into microtubule protafilaments, a critical step in centrosome duplication and spindle formation. The protein is Tubulin gamma-2 chain (TUBG2) of Bos taurus (Bovine).